We begin with the raw amino-acid sequence, 148 residues long: uncharacterized protein (148 aa).

Low complexity predominate over residues Val65–Asp79. The tract at residues Val65 to Gly85 is disordered.

This is an uncharacterized protein from Saccharomyces cerevisiae (strain ATCC 204508 / S288c) (Baker's yeast).